The chain runs to 268 residues: Testis-specific serine/threonine-protein kinase 3 (268 aa).

The Protein kinase domain occupies 10 to 265; that stretch reads YQLGKTIGEG…IEEVSWHPWL (256 aa). ATP-binding positions include 16–24 and Lys-39; that span reads IGEGTYSKV. Asp-134 functions as the Proton acceptor in the catalytic mechanism. Ser-166 carries the phosphoserine; by autocatalysis modification. Phosphothreonine; by PDPK1 is present on Thr-168.

It belongs to the protein kinase superfamily. CAMK Ser/Thr protein kinase family. Mg(2+) is required as a cofactor. Mn(2+) serves as cofactor. In terms of processing, autophosphorylated at Ser-166. Phosphorylation at Thr-168 by PDPK1 activates the serine/threonine protein kinase activity. Developmentally expressed in testicular germ cells. In adult testis, expression was detected in round and condensing spermatids, but not in meiotic pachytene spermatocytes. Not expressed in brain, ovary, kidney, liver or early embryonic cells.

It localises to the cell projection. It is found in the cilium. Its subcellular location is the flagellum. The enzyme catalyses L-seryl-[protein] + ATP = O-phospho-L-seryl-[protein] + ADP + H(+). It carries out the reaction L-threonyl-[protein] + ATP = O-phospho-L-threonyl-[protein] + ADP + H(+). With respect to regulation, activated by phosphorylation on Thr-168 by PDPK1. Its function is as follows. Serine/threonine protein kinase required for spermatid development and male fertility. This is Testis-specific serine/threonine-protein kinase 3 from Mus musculus (Mouse).